A 734-amino-acid chain; its full sequence is Threonine--tRNA ligase, cytoplasmic (734 aa).

A disordered region spans residues 1–41 (MSASEAGVTEQVKKLSVKDSSNDAVKPNKKENKKSKQQSLY). The span at 11-30 (QVKKLSVKDSSNDAVKPNKK) shows a compositional bias: basic and acidic residues. Residues 69–135 (SMPRVPLKIV…EGEANEEIKL (67 aa)) enclose the TGS domain. Phosphoserine is present on residues Ser-195 and Ser-289. Residues Thr-297 and Thr-381 each carry the phosphothreonine modification. Residues Ser-453 and Ser-457 each carry the phosphoserine modification. Thr-460 carries the post-translational modification Phosphothreonine. The residue at position 605 (Ser-605) is a Phosphoserine.

It belongs to the class-II aminoacyl-tRNA synthetase family.

The protein resides in the cytoplasm. The catalysed reaction is tRNA(Thr) + L-threonine + ATP = L-threonyl-tRNA(Thr) + AMP + diphosphate + H(+). This Saccharomyces cerevisiae (strain ATCC 204508 / S288c) (Baker's yeast) protein is Threonine--tRNA ligase, cytoplasmic (THS1).